We begin with the raw amino-acid sequence, 427 residues long: UPF0229 protein YeaH (427 aa).

The disordered stretch occupies residues 84 to 110 (QSDRIERPQGGGGGSGSGQGQASQDGE). Residues 92-102 (QGGGGGSGSGQ) are compositionally biased toward gly residues.

Belongs to the UPF0229 family.

The protein is UPF0229 protein YeaH of Escherichia fergusonii (strain ATCC 35469 / DSM 13698 / CCUG 18766 / IAM 14443 / JCM 21226 / LMG 7866 / NBRC 102419 / NCTC 12128 / CDC 0568-73).